Reading from the N-terminus, the 268-residue chain is Tryptophan synthase alpha chain (268 aa).

Catalysis depends on proton acceptor residues glutamate 49 and aspartate 60.

The protein belongs to the TrpA family. Tetramer of two alpha and two beta chains.

The enzyme catalyses (1S,2R)-1-C-(indol-3-yl)glycerol 3-phosphate + L-serine = D-glyceraldehyde 3-phosphate + L-tryptophan + H2O. The protein operates within amino-acid biosynthesis; L-tryptophan biosynthesis; L-tryptophan from chorismate: step 5/5. In terms of biological role, the alpha subunit is responsible for the aldol cleavage of indoleglycerol phosphate to indole and glyceraldehyde 3-phosphate. The protein is Tryptophan synthase alpha chain of Escherichia coli (strain SE11).